Here is a 746-residue protein sequence, read N- to C-terminus: NAD(P)H-quinone oxidoreductase subunit 5, chloroplastic (746 aa).

A run of 16 helical transmembrane segments spans residues 9–29 (WIIP…LLLF), 40–60 (WAFP…DLSI), 89–109 (IDSL…LVLI), 121–140 (YLRF…GLVT), 147–167 (VYIF…FWFT), 185–205 (GDFG…SLEF), 219–239 (NEVN…GSVA), 258–278 (TPIS…FLVA), 280–300 (LLPL…IGII), 327–347 (LGYM…FHLI), 354–374 (ALLF…VGYS), 396–416 (MSFL…CFWS), 425–445 (WLYS…TAFY), 552–572 (LFSM…GISF), 606–626 (FFIN…IASF), and 726–746 (SYIF…YLFP).

Belongs to the complex I subunit 5 family. NDH is composed of at least 16 different subunits, 5 of which are encoded in the nucleus.

It localises to the plastid. Its subcellular location is the chloroplast thylakoid membrane. The catalysed reaction is a plastoquinone + NADH + (n+1) H(+)(in) = a plastoquinol + NAD(+) + n H(+)(out). It carries out the reaction a plastoquinone + NADPH + (n+1) H(+)(in) = a plastoquinol + NADP(+) + n H(+)(out). In terms of biological role, NDH shuttles electrons from NAD(P)H:plastoquinone, via FMN and iron-sulfur (Fe-S) centers, to quinones in the photosynthetic chain and possibly in a chloroplast respiratory chain. The immediate electron acceptor for the enzyme in this species is believed to be plastoquinone. Couples the redox reaction to proton translocation, and thus conserves the redox energy in a proton gradient. This Vicia faba (Broad bean) protein is NAD(P)H-quinone oxidoreductase subunit 5, chloroplastic (ndhF).